The following is a 433-amino-acid chain: Steroid C26-monooxygenase (433 aa).

Gly-202 serves as a coordination point for substrate. A heme-binding site is contributed by Cys-377.

This sequence belongs to the cytochrome P450 family. Requires heme as cofactor.

The enzyme catalyses cholest-4-en-3-one + 6 reduced [2Fe-2S]-[ferredoxin] + 3 O2 + 5 H(+) = (25S)-3-oxocholest-4-en-26-oate + 6 oxidized [2Fe-2S]-[ferredoxin] + 4 H2O. It functions in the pathway steroid metabolism; cholesterol degradation. Involved in the utilization of cholesterol as the sole carbon and energy source by degrading the side chain during infection. Primarily catalyzes the sequential oxidation of the terminal methyl of cholest-4-en-3-one into (25S)-26-hydroxycholest-4-en-3-one (alcohol), (25S)-26-oxocholest-4-en-3-one (aldehyde), to finally yield the carboxylic acid (25S)-3-oxocholest-4-en-26-oate. Also able to sequentially oxidize cholesterol itself, not only cholest-4-en-3-one. This Mycobacterium bovis (strain ATCC BAA-935 / AF2122/97) protein is Steroid C26-monooxygenase (cyp125).